Here is a 561-residue protein sequence, read N- to C-terminus: Transmembrane protein 209 (561 aa).

Phosphoserine is present on residues serine 9 and serine 11. A helical transmembrane segment spans residues 28-48 (VVLAWGLLNVSMAGMIYTEMT). A glycan (N-linked (GlcNAc...) asparagine) is linked at asparagine 57. The chain crosses the membrane as a helical span at residues 60 to 80 (YWPLWYIELALASLFSLNALF). Serine 98 carries the phosphoserine modification. Disordered stretches follow at residues 119 to 157 (DLAA…FTTS) and 195 to 234 (FSPS…DKED). Low complexity predominate over residues 133–157 (SIQGQSVLSYSPSRSPSTSPKFTTS). 3 positions are modified to phosphoserine: serine 201, serine 222, and serine 248. Positions 220–229 (RSSPTVYNSP) are enriched in polar residues. The tract at residues 250 to 271 (EEKQHRVKLGSPDSTSPSSSPT) is disordered. The span at 260–271 (SPDSTSPSSSPT) shows a compositional bias: low complexity. A glycan (N-linked (GlcNAc...) asparagine) is linked at asparagine 274. Position 278 is a phosphoserine (serine 278).

As to quaternary structure, interacts with NUP205. As to expression, expressed in the testis.

It localises to the membrane. Its subcellular location is the nucleus envelope. The protein localises to the golgi apparatus. It is found in the cytoplasm. Nuclear envelope protein which in association with NUP205, may be involved in nuclear transport of various nuclear proteins in addition to MYC. The polypeptide is Transmembrane protein 209 (TMEM209) (Homo sapiens (Human)).